The following is a 451-amino-acid chain: Signal recognition particle protein (451 aa).

GTP contacts are provided by residues 107–114 (GLQGSGKT), 190–194 (DTAGR), and 248–251 (TKTD).

Belongs to the GTP-binding SRP family. SRP54 subfamily. In terms of assembly, part of the signal recognition particle protein translocation system, which is composed of SRP and FtsY. SRP is a ribonucleoprotein composed of Ffh and a 4.5S RNA molecule.

The protein localises to the cytoplasm. It catalyses the reaction GTP + H2O = GDP + phosphate + H(+). Functionally, involved in targeting and insertion of nascent membrane proteins into the cytoplasmic membrane. Binds to the hydrophobic signal sequence of the ribosome-nascent chain (RNC) as it emerges from the ribosomes. The SRP-RNC complex is then targeted to the cytoplasmic membrane where it interacts with the SRP receptor FtsY. Interaction with FtsY leads to the transfer of the RNC complex to the Sec translocase for insertion into the membrane, the hydrolysis of GTP by both Ffh and FtsY, and the dissociation of the SRP-FtsY complex into the individual components. The chain is Signal recognition particle protein from Buchnera aphidicola subsp. Acyrthosiphon pisum (strain APS) (Acyrthosiphon pisum symbiotic bacterium).